A 372-amino-acid polypeptide reads, in one-letter code: Chaperone protein DnaJ (372 aa).

Residues 5–70 (DYYELLEISR…EKKSIYDRYG (66 aa)) form the J domain. A CR-type zinc finger spans residues 134–211 (GCNKEINYKY…CKGTGYEEVK (78 aa)). Zn(2+) contacts are provided by C147, C150, C163, C166, C185, C188, C199, and C202. CXXCXGXG motif repeat units lie at residues 147–154 (CKPCEGTG), 163–170 (CPTCKGQG), 185–192 (CPRCGGTG), and 199–206 (CKSCKGTG).

The protein belongs to the DnaJ family. As to quaternary structure, homodimer. The cofactor is Zn(2+).

The protein resides in the cytoplasm. Participates actively in the response to hyperosmotic and heat shock by preventing the aggregation of stress-denatured proteins and by disaggregating proteins, also in an autonomous, DnaK-independent fashion. Unfolded proteins bind initially to DnaJ; upon interaction with the DnaJ-bound protein, DnaK hydrolyzes its bound ATP, resulting in the formation of a stable complex. GrpE releases ADP from DnaK; ATP binding to DnaK triggers the release of the substrate protein, thus completing the reaction cycle. Several rounds of ATP-dependent interactions between DnaJ, DnaK and GrpE are required for fully efficient folding. Also involved, together with DnaK and GrpE, in the DNA replication of plasmids through activation of initiation proteins. The protein is Chaperone protein DnaJ of Aliarcobacter butzleri (strain RM4018) (Arcobacter butzleri).